Consider the following 265-residue polypeptide: Serine protease harobin (265 aa).

Positions 1–18 (MPLIRVLASLLILQLSYG) are cleaved as a signal peptide. Residues 19–33 (KSLDNGAKAITSLDR) constitute a propeptide that is removed on maturation. Positions 34 to 257 (IIGGFECNPS…YKDWIEGIIA (224 aa)) constitute a Peptidase S1 domain. 7 disulfide bridges follow: C40-C172, C59-C75, C106-C152, C107-C264, C151-C218, C183-C197, and C208-C233. The active-site Charge relay system is the H74. N-linked (GlcNAc...) asparagine glycosylation is present at N112. Catalysis depends on D119, which acts as the Charge relay system. N130 carries an N-linked (GlcNAc...) asparagine glycan. S212 serves as the catalytic Charge relay system.

It belongs to the peptidase S1 family. Snake venom subfamily. Monomer. In terms of processing, harobin contains three additional Cys residues than other snake venom serine proteases, suggesting an additional disulfide bond. In addition, it is more stable than other snake 6-disulfide-bond serine proteases, since it is less sensitive to DTT. In terms of tissue distribution, expressed by the venom gland.

The protein resides in the secreted. Inhibited by PMSF. Functionally, serine protein with fibrinolytic and fibrinogenolytic activities. Degrades Bbeta-chain (FGB) of fibrinogen first and then the Aalpha-chain (FGA). Gamma-chain (FGG) are also digested on prolonged incubation. In vitro, it cleaves high molecular weight (HMW) kininogen (KNG) releasing bradykinin that promotes vasodilation. In vitro and in vivo, it cleaves angiotensin-2 (AGT). This explains the reduction of blood pressure in hypertensive rats. Also has antithrombotic effects on thrombosis animal models. This Hydrophis hardwickii (Hardwick's spine-bellied seasnake) protein is Serine protease harobin.